The following is a 1444-amino-acid chain: ABC transporter G family member 39 (1444 aa).

The disordered stretch occupies residues 1–36 (MDIVRMGSVASGGGSVRRTASSWRGTSGRSDAFGRS). A compositionally biased stretch (polar residues) spans 19–29 (TASSWRGTSGR). One can recognise an ABC transporter 1 domain in the interval 154–426 (LSAMRIVSSG…FEAMGFKCPE (273 aa)). ATP is bound at residue 187 to 194 (GPPGSGKT). The ABC transmembrane type-2 1 domain occupies 504–717 (ELTKACFSRE…AQNAIAVNEF (214 aa)). 6 helical membrane-spanning segments follow: residues 522–542 (FVYIFKILQLIILGSIGMTVF), 555–575 (GAIFLGAMFLGLVTHLFNGFA), 610–630 (IPISFLECAVWICMTYYVMGF), 642–662 (VLLVLISQMASGLFRLLAALG), 667–687 (VADTFGSFAQLILLVLGGFLI), and 754–774 (IGVGALLGYIMLFNILFILFL). In terms of domain architecture, ABC transporter 2 spans 846–1098 (ITFDNIRYSV…HLINYFEGIQ (253 aa)). 891–898 (GVSGAGKT) serves as a coordination point for ATP. The ABC transmembrane type-2 2 domain occupies 1171–1385 (TQCMACLWKQ…TLYGLVASQY (215 aa)). 7 helical membrane-spanning segments follow: residues 1192–1212 (ATRIFFTTVIALIFGTIFLNL), 1220–1240 (LDLFNSLGSMYAAVLFIGIQN), 1278–1298 (IPHIFLQTVVYGLIVYSLIGF), 1305–1325 (FFWYMFFMFFTFMYFTFYGMM), 1335–1355 (IAAIVSTAFYCIWNIFAGFLI), 1362–1382 (IWWRWYSWACPVAWTLYGLVA), and 1414–1434 (LGYVATAVVGFAALFAFVFAF).

Belongs to the ABC transporter superfamily. ABCG family. PDR (TC 3.A.1.205) subfamily.

Its subcellular location is the membrane. In terms of biological role, may be a general defense protein. The sequence is that of ABC transporter G family member 39 from Oryza sativa subsp. japonica (Rice).